The sequence spans 647 residues: Pumilio homolog 3 (647 aa).

A compositionally biased stretch (basic residues) spans 1–10 (MEVKGKKKFT). The interval 1–123 (MEVKGKKKFT…KKKKELKQSR (123 aa)) is disordered. An N6-acetyllysine modification is found at K33. Over residues 59–68 (PGKKGVKQFK) the composition is skewed to basic residues. The span at 102–123 (SGAKKPKWDDFKKKKKELKQSR) shows a compositional bias: basic and acidic residues. A Nuclear localization signal motif is present at residues 105-117 (KKPKWDDFKKKKK). The PUM-HD domain maps to 142 to 509 (ESLRRKDCDK…VVLDKSACVL (368 aa)). Pumilio repeat units follow at residues 176-211 (HDST…LSKA), 212-247 (KYSR…MLRH), 248-276 (SEAS…ELYG), 288-324 (PTLD…VIKH), 325-360 (SLVH…LAHT), 361-396 (HDGA…VANG), 397-434 (QYSH…IVND), 435-503 (KYGR…VVLD), 504-550 (KSAC…VAEH), 551-595 (PAGH…WASI), and 596-635 (NRGA…KSSS).

Interacts with PARP1 (via catalytic domain). In terms of tissue distribution, in the adult eye, expressed primarily in retinal ganglion cells and, to a lesser extent, in the pigmented cells.

The protein localises to the nucleus. Its subcellular location is the nucleolus. The protein resides in the nucleoplasm. It localises to the chromosome. Functionally, inhibits the poly(ADP-ribosyl)ation activity of PARP1 and the degradation of PARP1 by CASP3 following genotoxic stress. Binds to double-stranded RNA or DNA without sequence specificity. Involved in development of the eye and of primordial germ cells. In Mus musculus (Mouse), this protein is Pumilio homolog 3.